The primary structure comprises 777 residues: 5-methyltetrahydropteroyltriglutamate--homocysteine methyltransferase (777 aa).

Residues 17–20 (RELK) and Lys-132 each bind 5-methyltetrahydropteroyltri-L-glutamate. Residues 455–457 (IGS) and Glu-508 contribute to the L-homocysteine site. Residues 455 to 457 (IGS) and Glu-508 each bind L-methionine. 5-methyltetrahydropteroyltri-L-glutamate is bound by residues 539–540 (RC) and Trp-585. An L-homocysteine-binding site is contributed by Asp-623. Asp-623 is an L-methionine binding site. Residue Glu-629 participates in 5-methyltetrahydropteroyltri-L-glutamate binding. The Zn(2+) site is built by His-665, Cys-667, and Glu-689. The active-site Proton donor is His-718. Position 750 (Cys-750) interacts with Zn(2+).

Belongs to the vitamin-B12 independent methionine synthase family. Zn(2+) is required as a cofactor.

The catalysed reaction is 5-methyltetrahydropteroyltri-L-glutamate + L-homocysteine = tetrahydropteroyltri-L-glutamate + L-methionine. The protein operates within amino-acid biosynthesis; L-methionine biosynthesis via de novo pathway; L-methionine from L-homocysteine (MetE route): step 1/1. Catalyzes the transfer of a methyl group from 5-methyltetrahydrofolate to homocysteine resulting in methionine formation. The polypeptide is 5-methyltetrahydropteroyltriglutamate--homocysteine methyltransferase (Caulobacter vibrioides (strain ATCC 19089 / CIP 103742 / CB 15) (Caulobacter crescentus)).